The primary structure comprises 325 residues: Replication factor C small subunit (325 aa).

52 to 59 (GPAGVGKT) provides a ligand contact to ATP.

This sequence belongs to the activator 1 small subunits family. RfcS subfamily. Heteromultimer composed of small subunits (RfcS) and large subunits (RfcL).

In terms of biological role, part of the RFC clamp loader complex which loads the PCNA sliding clamp onto DNA. The sequence is that of Replication factor C small subunit from Natronomonas pharaonis (strain ATCC 35678 / DSM 2160 / CIP 103997 / JCM 8858 / NBRC 14720 / NCIMB 2260 / Gabara) (Halobacterium pharaonis).